The sequence spans 426 residues: Elongation factor Tu, mitochondrial (426 aa).

Residues 1 to 27 (MFKNLAGSFRAVSRVAFKTRPSLVRSY) constitute a mitochondrion transit peptide. The region spanning 34 to 230 (KPHVNIGTIG…AVDEHIPTPT (197 aa)) is the tr-type G domain. Positions 43 to 50 (GHVDHGKT) are G1. A GTP-binding site is contributed by 43–50 (GHVDHGKT). Positions 84-88 (GITIS) are G2. The interval 105–108 (DCPG) is G3. Residues 105–109 (DCPGH) and 160–163 (NKVD) contribute to the GTP site. A G4 region spans residues 160–163 (NKVD). The tract at residues 198-200 (SAL) is G5.

It belongs to the TRAFAC class translation factor GTPase superfamily. Classic translation factor GTPase family. EF-Tu/EF-1A subfamily.

It is found in the mitochondrion. It functions in the pathway protein biosynthesis; polypeptide chain elongation. G-protein that, in its active GTP-bound form, binds to and delivers aminoacyl-tRNA to the A-site of ribosomes during protein biosynthesis. In the presence of a correct codon-anticodon match between the aminoacyl-tRNA and the A-site codon of the ribosome-bound mRNA, the ribosome acts as a GTPase activator and the GTP is hydrolyzed. The inactive GDP-bound form leaves the ribosome and must be recycled before binding another molecule of aminoacyl-tRNA. Required for mitochondrial protein biosynthesis and maintenance of mitochondrial DNA. This chain is Elongation factor Tu, mitochondrial (TUF1), found in Meyerozyma guilliermondii (strain ATCC 6260 / CBS 566 / DSM 6381 / JCM 1539 / NBRC 10279 / NRRL Y-324) (Yeast).